Reading from the N-terminus, the 647-residue chain is MINITFPDGAVREFESGVTTFEIAQSISNSLAKKALAGKFNGKLIDTTRAITEDGSIEIVTPDHEDALPILRHSATHLFAQAARRLFPDIHLGVGPAIEDGFYYDTDHTAGQISNEDLPRIEEEMQKIVKENFPSIREEVTKDEAREIFKNDPYKLELIEEHSEDEGGLTIYRQGEYVDLCRGPHVPSTGRIQIFHLLHVAGAYWRGNSDNAMMQRIYGTAWFDKKDLKNYLQMREEAKERDHRKLGKELDLFMISQEVGQGLPFWLPNGATIRRELERYIVNKELVSGYQHVYTPPLASVELYKTSGHWDHYQEDMFPTMDMGDGEEFVLRPMNCPHHIQVFKHHVHSYRELPIRIAEIGMMHRYEKSGALTGLQRVREMSLNDGHLFVTPEQIQEEFQRALQLIIDVYEDFNLTDYRFRLSLRDPQDTHKYFDNDEMWENAQTMLRAALDEMGVDYFEAEGEAAFYGPKLDIQIKTALGKEETLSTIQLDFLLPERFDLKYIGADGEDHRPVMIHRGVISTMERFTAILIENYKGAFPTWLAPHQVTLIPVSNEKHVDYAWEVAKKLRDRGVRADVDERNEKMQFKIRASQTSKIPYQLIVGDKEMEDETVNVRRYGQKETQTVSVDNFVQAILADIANKSRVEK.

Residues 1-61 (MINITFPDGA…TEDGSIEIVT (61 aa)) form the TGS domain. The tract at residues 242–540 (DHRKLGKELD…LIENYKGAFP (299 aa)) is catalytic. Residues cysteine 336, histidine 387, and histidine 517 each coordinate Zn(2+).

Belongs to the class-II aminoacyl-tRNA synthetase family. Homodimer. The cofactor is Zn(2+).

It localises to the cytoplasm. The catalysed reaction is tRNA(Thr) + L-threonine + ATP = L-threonyl-tRNA(Thr) + AMP + diphosphate + H(+). Catalyzes the attachment of threonine to tRNA(Thr) in a two-step reaction: L-threonine is first activated by ATP to form Thr-AMP and then transferred to the acceptor end of tRNA(Thr). Also edits incorrectly charged L-seryl-tRNA(Thr). The protein is Threonine--tRNA ligase of Streptococcus pneumoniae serotype 2 (strain D39 / NCTC 7466).